Reading from the N-terminus, the 223-residue chain is Probable transaldolase (223 aa).

Lys-92 acts as the Schiff-base intermediate with substrate in catalysis.

The protein belongs to the transaldolase family. Type 3B subfamily.

Its subcellular location is the cytoplasm. It carries out the reaction D-sedoheptulose 7-phosphate + D-glyceraldehyde 3-phosphate = D-erythrose 4-phosphate + beta-D-fructose 6-phosphate. It participates in carbohydrate degradation; pentose phosphate pathway; D-glyceraldehyde 3-phosphate and beta-D-fructose 6-phosphate from D-ribose 5-phosphate and D-xylulose 5-phosphate (non-oxidative stage): step 2/3. Transaldolase is important for the balance of metabolites in the pentose-phosphate pathway. The protein is Probable transaldolase of Thermus thermophilus (strain ATCC 27634 / DSM 579 / HB8).